Consider the following 129-residue polypeptide: Transcription antitermination protein NusB (129 aa).

The protein belongs to the NusB family.

Its function is as follows. Involved in transcription antitermination. Required for transcription of ribosomal RNA (rRNA) genes. Binds specifically to the boxA antiterminator sequence of the ribosomal RNA (rrn) operons. In Staphylococcus aureus (strain N315), this protein is Transcription antitermination protein NusB.